The sequence spans 447 residues: Tubulin beta chain (447 aa).

8 residues coordinate GTP: glutamine 11, glutamate 69, serine 138, glycine 142, threonine 143, glycine 144, asparagine 204, and asparagine 226. Glutamate 69 serves as a coordination point for Mg(2+).

Belongs to the tubulin family. In terms of assembly, dimer of alpha and beta chains. A typical microtubule is a hollow water-filled tube with an outer diameter of 25 nm and an inner diameter of 15 nM. Alpha-beta heterodimers associate head-to-tail to form protofilaments running lengthwise along the microtubule wall with the beta-tubulin subunit facing the microtubule plus end conferring a structural polarity. Microtubules usually have 13 protofilaments but different protofilament numbers can be found in some organisms and specialized cells. The cofactor is Mg(2+).

Its subcellular location is the cytoplasm. The protein resides in the cytoskeleton. Tubulin is the major constituent of microtubules, a cylinder consisting of laterally associated linear protofilaments composed of alpha- and beta-tubulin heterodimers. Microtubules grow by the addition of GTP-tubulin dimers to the microtubule end, where a stabilizing cap forms. Below the cap, tubulin dimers are in GDP-bound state, owing to GTPase activity of alpha-tubulin. The sequence is that of Tubulin beta chain from Trichophyton rubrum (Athlete's foot fungus).